A 145-amino-acid chain; its full sequence is MGKIWVLHGPNLNLLGRREPDKYGTQTLDEINNELLHKAHTAGIPIQVEQTNFEGELIQWIHSMGPDDFLIINPGAWTHYSYAVRDAITSVQVPTIEVHLSNIHAREEFRKTSVIAPVCCGQISGLGGKSYSLALDYALEALTQK.

Tyr-23 functions as the Proton acceptor in the catalytic mechanism. Residues Asn-73, His-79, and Asp-86 each coordinate substrate. Catalysis depends on His-99, which acts as the Proton donor. Residues 100-101 (LS) and Arg-110 each bind substrate.

The protein belongs to the type-II 3-dehydroquinase family. As to quaternary structure, homododecamer.

The enzyme catalyses 3-dehydroquinate = 3-dehydroshikimate + H2O. Its pathway is metabolic intermediate biosynthesis; chorismate biosynthesis; chorismate from D-erythrose 4-phosphate and phosphoenolpyruvate: step 3/7. In terms of biological role, catalyzes a trans-dehydration via an enolate intermediate. In Desulfitobacterium hafniense (strain Y51), this protein is 3-dehydroquinate dehydratase.